A 78-amino-acid polypeptide reads, in one-letter code: Serine--glyoxylate aminotransferase (78 aa).

This sequence belongs to the class-V pyridoxal-phosphate-dependent aminotransferase family. Homodimer. The cofactor is pyridoxal 5'-phosphate. In terms of tissue distribution, expressed in leaves but not in root tissue or seedlings.

It localises to the peroxisome. It carries out the reaction glyoxylate + L-serine = 3-hydroxypyruvate + glycine. The catalysed reaction is glyoxylate + L-alanine = glycine + pyruvate. Its activity is regulated as follows. Inhibited by aminooxyacetate. This Triticum aestivum (Wheat) protein is Serine--glyoxylate aminotransferase.